The chain runs to 99 residues: uncharacterized protein (99 aa).

3 helical membrane passes run 7–29 (FFIS…YTLY), 39–61 (FISS…ARYN), and 68–90 (FCNL…LWLL).

The protein resides in the cell membrane. This is an uncharacterized protein from Archaeoglobus fulgidus (strain ATCC 49558 / DSM 4304 / JCM 9628 / NBRC 100126 / VC-16).